The chain runs to 471 residues: Ribulose bisphosphate carboxylase large chain (471 aa).

2 residues coordinate substrate: N115 and T165. K167 functions as the Proton acceptor in the catalytic mechanism. K169 provides a ligand contact to substrate. Mg(2+)-binding residues include K193, D195, and E196. Position 193 is an N6-carboxylysine (K193). H286 (proton acceptor) is an active-site residue. Substrate-binding residues include R287, H319, and S371.

This sequence belongs to the RuBisCO large chain family. Type I subfamily. Heterohexadecamer of 8 large chains and 8 small chains. Mg(2+) is required as a cofactor.

Its subcellular location is the carboxysome. It carries out the reaction 2 (2R)-3-phosphoglycerate + 2 H(+) = D-ribulose 1,5-bisphosphate + CO2 + H2O. The catalysed reaction is D-ribulose 1,5-bisphosphate + O2 = 2-phosphoglycolate + (2R)-3-phosphoglycerate + 2 H(+). RuBisCO catalyzes two reactions: the carboxylation of D-ribulose 1,5-bisphosphate, the primary event in carbon dioxide fixation, as well as the oxidative fragmentation of the pentose substrate in the photorespiration process. Both reactions occur simultaneously and in competition at the same active site. The polypeptide is Ribulose bisphosphate carboxylase large chain (Prochlorococcus marinus (strain MIT 9515)).